The sequence spans 147 residues: Fluoride-specific ion channel FluC 1 (147 aa).

4 helical membrane passes run 29-49 (YVYI…ISFL), 61-81 (IANL…IAFF), 90-110 (AITT…LELI), and 118-138 (FITL…LCYV). Na(+)-binding residues include G97 and T100.

The protein belongs to the fluoride channel Fluc/FEX (TC 1.A.43) family.

Its subcellular location is the cell membrane. It catalyses the reaction fluoride(in) = fluoride(out). Na(+) is not transported, but it plays an essential structural role and its presence is essential for fluoride channel function. Fluoride-specific ion channel. Important for reducing fluoride concentration in the cell, thus reducing its toxicity. The sequence is that of Fluoride-specific ion channel FluC 1 from Staphylococcus aureus (strain MRSA252).